Here is a 189-residue protein sequence, read N- to C-terminus: Frataxin-like protein, mitochondrial (189 aa).

The N-terminal 50 residues, 1–50 (MNCARLHQRIPLRAMALTTTSYPALAPSHSFANASTSVMTASAMAVAHRA), are a transit peptide targeting the mitochondrion.

Belongs to the frataxin family. As to quaternary structure, interacts with IscU; the interaction is direct.

The protein resides in the mitochondrion. It carries out the reaction 4 Fe(2+) + O2 + 4 H(+) = 4 Fe(3+) + 2 H2O. In terms of biological role, iron-binding protein which binds 2 iron atoms per monomer. Probably, acts as an iron carrier for the biosynthesis of Fe-S clusters. Stimulates the cysteine desulphurase activity of IscS in the presence of IscU. In Leishmania donovani, this protein is Frataxin-like protein, mitochondrial.